Here is a 319-residue protein sequence, read N- to C-terminus: ATP-dependent 6-phosphofructokinase (319 aa).

An ATP-binding site is contributed by Gly11. An ADP-binding site is contributed by 21-25; sequence RAVVR. Residues 72–73 and 102–105 each bind ATP; these read RC and GDGS. A Mg(2+)-binding site is contributed by Asp103. Substrate is bound at residue 125–127; sequence TID. Residue Asp127 is the Proton acceptor of the active site. Arg154 is a binding site for ADP. Substrate contacts are provided by residues Arg162 and 169-171; that span reads MGR. Residues 185–187, Arg211, and 213–215 each bind ADP; these read GAE and KKH. Substrate-binding positions include Glu222, Arg243, and 249–252; that span reads HIQR.

This sequence belongs to the phosphofructokinase type A (PFKA) family. ATP-dependent PFK group I subfamily. Prokaryotic clade 'B1' sub-subfamily. In terms of assembly, homotetramer. Requires Mg(2+) as cofactor.

The protein localises to the cytoplasm. The enzyme catalyses beta-D-fructose 6-phosphate + ATP = beta-D-fructose 1,6-bisphosphate + ADP + H(+). It functions in the pathway carbohydrate degradation; glycolysis; D-glyceraldehyde 3-phosphate and glycerone phosphate from D-glucose: step 3/4. Its activity is regulated as follows. Allosterically activated by ADP and other diphosphonucleosides, and allosterically inhibited by phosphoenolpyruvate. Functionally, catalyzes the phosphorylation of D-fructose 6-phosphate to fructose 1,6-bisphosphate by ATP, the first committing step of glycolysis. In Bacillus pumilus (strain SAFR-032), this protein is ATP-dependent 6-phosphofructokinase.